Consider the following 238-residue polypeptide: CS1 fimbrial subunit B (238 aa).

The signal sequence occupies residues 1–17; the sequence is MRKLFLSLLMIPFVAKA.

The protein localises to the fimbrium. Its function is as follows. Might function as a shuttle protein in the transport of fimbria through the periplasmic space or might function as an adhesin. In Escherichia coli, this protein is CS1 fimbrial subunit B (csoB).